A 119-amino-acid polypeptide reads, in one-letter code: Large ribosomal subunit protein uL18 (119 aa).

This sequence belongs to the universal ribosomal protein uL18 family. Part of the 50S ribosomal subunit; part of the 5S rRNA/L5/L18/L25 subcomplex. Contacts the 5S and 23S rRNAs.

Its function is as follows. This is one of the proteins that bind and probably mediate the attachment of the 5S RNA into the large ribosomal subunit, where it forms part of the central protuberance. This Staphylococcus aureus (strain bovine RF122 / ET3-1) protein is Large ribosomal subunit protein uL18.